We begin with the raw amino-acid sequence, 130 residues long: Glycine cleavage system H protein (130 aa).

Residues 24–106 (TVTIGITDHA…YDEGWFFKVK (83 aa)) form the Lipoyl-binding domain. Lys-65 is modified (N6-lipoyllysine).

This sequence belongs to the GcvH family. As to quaternary structure, the glycine cleavage system is composed of four proteins: P, T, L and H. The cofactor is (R)-lipoate.

In terms of biological role, the glycine cleavage system catalyzes the degradation of glycine. The H protein shuttles the methylamine group of glycine from the P protein to the T protein. This Teredinibacter turnerae (strain ATCC 39867 / T7901) protein is Glycine cleavage system H protein.